Consider the following 314-residue polypeptide: Deoxymugineic acid synthase 1-A (314 aa).

Residues 1–21 (MGAGDKTAAGMPRIGMGTAVQ) form a disordered region. NADP(+) is bound at residue Asp44. Residue Tyr49 is the Proton donor of the active site. A substrate-binding site is contributed by His112. NADP(+) contacts are provided by residues 158 to 159 (AN), Gln180, 258 to 266 (FDEARMREN), and 273 to 281 (ELTEEEHRR).

Belongs to the aldo/keto reductase family. In terms of tissue distribution, mostly expressed in root tissues, observed in mesocotyl and embryonic roots, seedling roots, crown and seedling leafes, mature bracts, anthers, pistil, caryopsis and embryos.

The enzyme catalyses 2'-deoxymugineate + NAD(+) = 3''-deamino-3''-oxonicotianamine + NADH + H(+). The catalysed reaction is 2'-deoxymugineate + NADP(+) = 3''-deamino-3''-oxonicotianamine + NADPH + H(+). It participates in siderophore biosynthesis. Its function is as follows. Catalyzes the reduction of a 3''-keto intermediate during the biosynthesis of 2'-deoxymugineic acid (DMA) from L-Met. Involved in the formation of phytosiderophores (MAs) belonging to the mugineic acid family and required to acquire iron. The sequence is that of Deoxymugineic acid synthase 1-A from Triticum aestivum (Wheat).